A 150-amino-acid polypeptide reads, in one-letter code: Ribonuclease K6 (150 aa).

Residues 1–23 (MVLCFPLLLLLLVLWGPVCPLHA) form the signal peptide. The active-site Proton acceptor is His-38. 4 cysteine pairs are disulfide-bonded: Cys-46/Cys-104, Cys-60/Cys-114, Cys-78/Cys-129, and Cys-85/Cys-92. Asn-55 carries an N-linked (GlcNAc...) asparagine glycan. Residues 61–65 (KHQNT) and Lys-86 contribute to the substrate site. Residue Asn-100 is glycosylated (N-linked (GlcNAc...) asparagine). Residue Arg-105 coordinates substrate. The active-site Proton donor is the His-145.

This sequence belongs to the pancreatic ribonuclease family. As to quaternary structure, interacts (via N-terminus) with bacterial lipopolysaccharide (LPS). Highly expressed in spleen (at protein level). Has little or no expression in healthy kidneys (at protein level). Detected in interstitial leukocytes in infected kidneys (at protein level). Expressed in ureter where it localizes to urothelial and submucosal leukocytes (at protein level). Strong expression in lung and thymus, and lower expression in heart, placenta, pancreas, liver, brain and skeletal muscle. Also expressed in monocytes and neutrophils.

The protein resides in the secreted. The protein localises to the lysosome. It is found in the cytoplasmic granule. Its function is as follows. Ribonuclease which shows a preference for the pyrimidines uridine and cytosine. Has potent antibacterial activity against a range of Gram-positive and Gram-negative bacteria, including P.aeruginosa, A.baumanii, M.luteus, S.aureus, E.faecalis, E.faecium, S.saprophyticus and E.coli. Causes loss of bacterial membrane integrity, and also promotes agglutination of Gram-negative bacteria. Probably contributes to urinary tract sterility. Bactericidal activity is independent of RNase activity. This is Ribonuclease K6 (RNASE6) from Homo sapiens (Human).